A 406-amino-acid chain; its full sequence is Tyrosine--tRNA ligase (406 aa).

Tyr35 contributes to the L-tyrosine binding site. Positions 40-49 match the 'HIGH' region motif; it reads PTADSLHVGH. Residues Tyr168 and Gln172 each contribute to the L-tyrosine site. The 'KMSKS' region motif lies at 228–232; that stretch reads KMGKT. Position 231 (Lys231) interacts with ATP. Positions 340-405 constitute an S4 RNA-binding domain; sequence STVLDVIAKV…GKKNYNKIEI (66 aa).

Belongs to the class-I aminoacyl-tRNA synthetase family. TyrS type 1 subfamily. Homodimer.

The protein localises to the cytoplasm. The enzyme catalyses tRNA(Tyr) + L-tyrosine + ATP = L-tyrosyl-tRNA(Tyr) + AMP + diphosphate + H(+). Its function is as follows. Catalyzes the attachment of tyrosine to tRNA(Tyr) in a two-step reaction: tyrosine is first activated by ATP to form Tyr-AMP and then transferred to the acceptor end of tRNA(Tyr). The chain is Tyrosine--tRNA ligase from Clostridium botulinum (strain Eklund 17B / Type B).